Here is a 334-residue protein sequence, read N- to C-terminus: 3-ketodihydrosphingosine reductase (334 aa).

A signal peptide spans 1–20 (MIIYILFSLLAAVIVHLVYK). Residues Gly36, Ser38, Ser39, Gly40, Arg62, Lys66, Asp100, and Ile101 each contribute to the NADPH site. The GXSXG motif lies at 36 to 40 (GGSSG). Ser182 functions as the Proton donor in the catalytic mechanism. Tyr196 acts as the Proton acceptor in catalysis. NADP(+) is bound by residues Tyr196 and Lys200. The active-site Lowers pKa of active site Tyr is Lys200.

It belongs to the short-chain dehydrogenases/reductases (SDR) family.

The protein localises to the endoplasmic reticulum. The catalysed reaction is sphinganine + NADP(+) = 3-oxosphinganine + NADPH + H(+). Its pathway is lipid metabolism; sphingolipid metabolism. Its function is as follows. Catalyzes the reduction of 3'-oxosphinganine (3-ketodihydrosphingosine/KDS) to sphinganine (dihydrosphingosine/DHS), the second step of de novo sphingolipid biosynthesis. The protein is 3-ketodihydrosphingosine reductase (ksrA-1) of Dictyostelium discoideum (Social amoeba).